A 202-amino-acid chain; its full sequence is Prohormone-4 (202 aa).

The N-terminal stretch at 1–28 (MVQRLCTSVAALSLALSACVFFPRAVMA) is a signal peptide. The 41-residue stretch at 46–86 (ACRPYEPFKCPGDDTCISIQYLCDGAPDCQDGYDEDSRLCT) folds into the LDL-receptor class A domain. Disulfide bonds link C47–C61, C55–C74, and C68–C85.

It is found in the secreted. The protein is Prohormone-4 of Apis mellifera (Honeybee).